The primary structure comprises 556 residues: MEQEARVLRAAGGFGRARRLLASASWVPCIVLGLVLSSEELLTAQPAPHCRPDPTLLPPALRALRGPALLDAAIPRLGPTRAPAEALGVLSPSYLAPLTRAPRPSSWASCSGAAAGPTWNLVCGDGWKVPLEQVSHLLGWLLGCVILGAGCDRFGRRAVFVASLVLTTGLGASEALAASFPTLLVLRLLHGGTLAGALLALYLARLELCDPPHRLAFSMGAGLFSVVGTLLLPGLAALVQDWRLLQGLGALMSGLLLLFWGFPALFPESPCWLLATGQVARARKILWRFAEASGVGPGDSSLEENSLATELTMLSARSPQPRYHSPLGLLRTRVTWRNGLILGFSSLVGGGIRASFRRSLAPQVPTFYLPYFLEAGLEAAALVFLLLTADCCGRRPVLLLGTMVTGLASLLLLAGAQYLPGWTVLFLSVLGLLASRAVSALSSLFAAEVFPTVIRGAGLGLVLGAGFLGQAAGPLDTLHGRQGFFLQQVVFASLAVLALLCVLLLPESRSRGLPQSLQDADRLRRSPLLRGRPRQDHLPLLPPSNSYWAGHTPEQH.

The Cytoplasmic segment spans residues 1–23 (MEQEARVLRAAGGFGRARRLLAS). The helical transmembrane segment at 24 to 44 (ASWVPCIVLGLVLSSEELLTA) threads the bilayer. At 45-128 (QPAPHCRPDP…WNLVCGDGWK (84 aa)) the chain is on the extracellular side. The helical transmembrane segment at 129–149 (VPLEQVSHLLGWLLGCVILGA) threads the bilayer. Topologically, residues 150–157 (GCDRFGRR) are cytoplasmic. The helical transmembrane segment at 158–178 (AVFVASLVLTTGLGASEALAA) threads the bilayer. At 179-182 (SFPT) the chain is on the extracellular side. Residues 183–203 (LLVLRLLHGGTLAGALLALYL) traverse the membrane as a helical segment. The Cytoplasmic segment spans residues 204–218 (ARLELCDPPHRLAFS). A helical transmembrane segment spans residues 219 to 239 (MGAGLFSVVGTLLLPGLAALV). Topologically, residues 240 to 246 (QDWRLLQ) are extracellular. Residues 247-267 (GLGALMSGLLLLFWGFPALFP) form a helical membrane-spanning segment. The Cytoplasmic portion of the chain corresponds to 268–339 (ESPCWLLATG…LRTRVTWRNG (72 aa)). Residues 340-357 (LILGFSSLVGGGIRASFR) traverse the membrane as a helical segment. Residues 358–366 (RSLAPQVPT) are Extracellular-facing. A helical membrane pass occupies residues 367-387 (FYLPYFLEAGLEAAALVFLLL). Topologically, residues 388–395 (TADCCGRR) are cytoplasmic. Residues 396–416 (PVLLLGTMVTGLASLLLLAGA) form a helical membrane-spanning segment. Residues 417-420 (QYLP) are Extracellular-facing. Residues 421-441 (GWTVLFLSVLGLLASRAVSAL) traverse the membrane as a helical segment. At 442–448 (SSLFAAE) the chain is on the cytoplasmic side. A helical transmembrane segment spans residues 449 to 469 (VFPTVIRGAGLGLVLGAGFLG). At 470-483 (QAAGPLDTLHGRQG) the chain is on the extracellular side. A helical transmembrane segment spans residues 484-504 (FFLQQVVFASLAVLALLCVLL). Topologically, residues 505–556 (LPESRSRGLPQSLQDADRLRRSPLLRGRPRQDHLPLLPPSNSYWAGHTPEQH) are cytoplasmic. The disordered stretch occupies residues 524–556 (RRSPLLRGRPRQDHLPLLPPSNSYWAGHTPEQH).

This sequence belongs to the major facilitator (TC 2.A.1) superfamily. Organic cation transporter (TC 2.A.1.19) family.

Its subcellular location is the membrane. Organic anion transporter that mediates the uptake of ions. This chain is Putative solute carrier family 22 member 31, found in Homo sapiens (Human).